A 428-amino-acid polypeptide reads, in one-letter code: Pyruvate dehydrogenase E1 component subunit alpha-3, chloroplastic (428 aa).

A chloroplast-targeting transit peptide spans 1 to 61 (MATAFAPTKL…NATRRSPVVS (61 aa)). Pyruvate is bound by residues His115, Tyr141, Arg142, Ala190, Ile192, Asp227, Gly228, and Asn256. Thiamine diphosphate is bound by residues Tyr141, Arg142, Ala190, Ile192, Asp227, Gly228, Asn256, and His325. A Mg(2+)-binding site is contributed by Asp227. Asn256 lines the Mg(2+) pocket.

Tetramer of 2 alpha and 2 beta subunits. It depends on thiamine diphosphate as a cofactor. The cofactor is Mg(2+).

The protein resides in the plastid. Its subcellular location is the chloroplast. It catalyses the reaction N(6)-[(R)-lipoyl]-L-lysyl-[protein] + pyruvate + H(+) = N(6)-[(R)-S(8)-acetyldihydrolipoyl]-L-lysyl-[protein] + CO2. In terms of biological role, the pyruvate dehydrogenase complex catalyzes the overall conversion of pyruvate to acetyl-CoA and CO(2). It contains multiple copies of three enzymatic components: pyruvate dehydrogenase (E1), dihydrolipoamide acetyltransferase (E2) and lipoamide dehydrogenase (E3). This chain is Pyruvate dehydrogenase E1 component subunit alpha-3, chloroplastic (PDH-E1 ALPHA), found in Arabidopsis thaliana (Mouse-ear cress).